The chain runs to 313 residues: tRNA dimethylallyltransferase (313 aa).

17 to 24 is a binding site for ATP; the sequence is GPTASGKT. Residue 19-24 coordinates substrate; it reads TASGKT. Interaction with substrate tRNA stretches follow at residues 42 to 45, 166 to 170, and 247 to 252; these read DSAL, QRLSR, and RCVGYR.

It belongs to the IPP transferase family. In terms of assembly, monomer. Mg(2+) serves as cofactor.

The catalysed reaction is adenosine(37) in tRNA + dimethylallyl diphosphate = N(6)-dimethylallyladenosine(37) in tRNA + diphosphate. In terms of biological role, catalyzes the transfer of a dimethylallyl group onto the adenine at position 37 in tRNAs that read codons beginning with uridine, leading to the formation of N6-(dimethylallyl)adenosine (i(6)A). This Serratia proteamaculans (strain 568) protein is tRNA dimethylallyltransferase.